The primary structure comprises 326 residues: Peroxidase 43 (326 aa).

The signal sequence occupies residues M1–A24. 4 disulfide bridges follow: C35–C112, C68–C73, C118–C322, and C196–C228. The Proton acceptor role is filled by H66. Positions 67, 70, 72, 74, and 76 each coordinate Ca(2+). N-linked (GlcNAc...) asparagine glycosylation is present at N151. Substrate is bound at residue P159. H189 provides a ligand contact to heme b. T190 contributes to the Ca(2+) binding site. The Ca(2+) site is built by D241, S244, and D249.

This sequence belongs to the peroxidase family. Classical plant (class III) peroxidase subfamily. Heme b serves as cofactor. Ca(2+) is required as a cofactor.

The protein localises to the secreted. The catalysed reaction is 2 a phenolic donor + H2O2 = 2 a phenolic radical donor + 2 H2O. Functionally, removal of H(2)O(2), oxidation of toxic reductants, biosynthesis and degradation of lignin, suberization, auxin catabolism, response to environmental stresses such as wounding, pathogen attack and oxidative stress. These functions might be dependent on each isozyme/isoform in each plant tissue. The protein is Peroxidase 43 (PER43) of Arabidopsis thaliana (Mouse-ear cress).